A 612-amino-acid chain; its full sequence is Elongation factor 4 (612 aa).

Residues 11–193 (KHIRNFSIVA…EIVKKVPAPD (183 aa)) enclose the tr-type G domain. GTP is bound by residues 23–28 (DHGKST) and 140–143 (NKID).

This sequence belongs to the TRAFAC class translation factor GTPase superfamily. Classic translation factor GTPase family. LepA subfamily.

It localises to the cell membrane. The catalysed reaction is GTP + H2O = GDP + phosphate + H(+). Functionally, required for accurate and efficient protein synthesis under certain stress conditions. May act as a fidelity factor of the translation reaction, by catalyzing a one-codon backward translocation of tRNAs on improperly translocated ribosomes. Back-translocation proceeds from a post-translocation (POST) complex to a pre-translocation (PRE) complex, thus giving elongation factor G a second chance to translocate the tRNAs correctly. Binds to ribosomes in a GTP-dependent manner. The protein is Elongation factor 4 of Lactobacillus johnsonii (strain CNCM I-12250 / La1 / NCC 533).